Here is a 2096-residue protein sequence, read N- to C-terminus: HEAT repeat-containing protein 1 homolog (2096 aa).

One copy of the HEAT repeat lies at 2058 to 2096; sequence TVPFIAELLEDEHQRVEKNTRTGVQELETILGESVQKYL.

Belongs to the HEATR1/UTP10 family. Part of the small subunit (SSU) processome, composed of more than 70 proteins and the RNA chaperone small nucleolar RNA (snoRNA) U3. Interacts with MYC; the interaction is required for localization of MYC to the nucleolus.

The protein localises to the nucleus. It localises to the nucleolus. Ribosome biogenesis factor; required for recruitment of Myc to nucleoli. Involved in nucleolar processing of pre-18S ribosomal RNA. Required for optimal pre-ribosomal RNA transcription by RNA polymerase I. Part of the small subunit (SSU) processome, first precursor of the small eukaryotic ribosomal subunit. During the assembly of the SSU processome in the nucleolus, many ribosome biogenesis factors, an RNA chaperone and ribosomal proteins associate with the nascent pre-rRNA and work in concert to generate RNA folding, modifications, rearrangements and cleavage as well as targeted degradation of pre-ribosomal RNA by the RNA exosome. Involved in neuronal-lineage cell proliferation during larval development. The chain is HEAT repeat-containing protein 1 homolog from Drosophila melanogaster (Fruit fly).